Consider the following 318-residue polypeptide: UDP-3-O-acylglucosamine N-acyltransferase (318 aa).

Histidine 231 (proton acceptor) is an active-site residue.

Belongs to the transferase hexapeptide repeat family. LpxD subfamily. Homotrimer.

The catalysed reaction is a UDP-3-O-[(3R)-3-hydroxyacyl]-alpha-D-glucosamine + a (3R)-hydroxyacyl-[ACP] = a UDP-2-N,3-O-bis[(3R)-3-hydroxyacyl]-alpha-D-glucosamine + holo-[ACP] + H(+). It functions in the pathway bacterial outer membrane biogenesis; LPS lipid A biosynthesis. Catalyzes the N-acylation of UDP-3-O-acylglucosamine using 3-hydroxyacyl-ACP as the acyl donor. Is involved in the biosynthesis of lipid A, a phosphorylated glycolipid that anchors the lipopolysaccharide to the outer membrane of the cell. The sequence is that of UDP-3-O-acylglucosamine N-acyltransferase from Campylobacter jejuni subsp. doylei (strain ATCC BAA-1458 / RM4099 / 269.97).